The primary structure comprises 110 residues: ATP-dependent Clp protease adapter protein ClpS (110 aa).

The protein belongs to the ClpS family. As to quaternary structure, binds to the N-terminal domain of the chaperone ClpA.

Its function is as follows. Involved in the modulation of the specificity of the ClpAP-mediated ATP-dependent protein degradation. This is ATP-dependent Clp protease adapter protein ClpS from Bartonella quintana (strain Toulouse) (Rochalimaea quintana).